The chain runs to 210 residues: Synaptosomal-associated protein 23 (210 aa).

Met1 carries the post-translational modification N-acetylmethionine. Ser5, Ser20, Ser23, and Ser34 each carry phosphoserine. In terms of domain architecture, t-SNARE coiled-coil homology 1 spans His14–Leu76. Residues Ser23–Leu76 are a coiled coil. 5 S-palmitoyl cysteine lipidation sites follow: Cys79, Cys80, Cys83, Cys85, and Cys87. The disordered stretch occupies residues Gly104 to Gly136. Over residues Ser109–Ala133 the composition is skewed to polar residues. Phosphoserine is present on residues Ser110 and Ser160. The 63-residue stretch at Asp145 to Leu207 folds into the t-SNARE coiled-coil homology 2 domain.

It belongs to the SNAP-25 family. Homotetramer (via coiled-coil domain), also forms heterotetramers with STX4 and VAMP3. Found in a complex with VAMP8 and STX1A. Found in a complex with VAMP8 and STX4 in pancreas. Interacts simultaneously with SNAPIN and SYN4. Interacts with STX1A. Interacts with STX12. Interacts tightly to multiple syntaxins and synaptobrevins/VAMPs. Interacts with ZDHHC13 (via ANK repeats). Interacts with ZDHHC17 (via ANK repeats).

The protein resides in the cell membrane. Its subcellular location is the synapse. It is found in the synaptosome. The protein localises to the cytoplasmic vesicle membrane. Its function is as follows. Essential component of the high affinity receptor for the general membrane fusion machinery and an important regulator of transport vesicle docking and fusion. The protein is Synaptosomal-associated protein 23 (Snap23) of Rattus norvegicus (Rat).